Here is a 191-residue protein sequence, read N- to C-terminus: Lipoprotein signal peptidase (191 aa).

Transmembrane regions (helical) follow at residues 26–46, 84–104, and 110–130; these read VWFPAVLVLVLIALDQWLKAW, AVPLALGRILVGLGILSYLLW, and FLTVVLSMIAAGAIGNSIDGL. Residues aspartate 137 and aspartate 163 contribute to the active site. A helical membrane pass occupies residues 156 to 176; that stretch reads FPIFNIADMCVVGGTILLLVA.

It belongs to the peptidase A8 family.

Its subcellular location is the cell membrane. The catalysed reaction is Release of signal peptides from bacterial membrane prolipoproteins. Hydrolyzes -Xaa-Yaa-Zaa-|-(S,diacylglyceryl)Cys-, in which Xaa is hydrophobic (preferably Leu), and Yaa (Ala or Ser) and Zaa (Gly or Ala) have small, neutral side chains.. The protein operates within protein modification; lipoprotein biosynthesis (signal peptide cleavage). Its function is as follows. This protein specifically catalyzes the removal of signal peptides from prolipoproteins. This is Lipoprotein signal peptidase from Deinococcus radiodurans (strain ATCC 13939 / DSM 20539 / JCM 16871 / CCUG 27074 / LMG 4051 / NBRC 15346 / NCIMB 9279 / VKM B-1422 / R1).